Here is a 482-residue protein sequence, read N- to C-terminus: tRNA sulfurtransferase (482 aa).

The 105-residue stretch at 61-165 (LAIRDALTRI…DDRLLLIKGR (105 aa)) folds into the THUMP domain. ATP is bound by residues 183–184 (LI), Lys265, Gly287, and Gln296. A disulfide bridge links Cys344 with Cys456. In terms of domain architecture, Rhodanese spans 404–482 (FGPNDVILDI…GFNNVKVYRP (79 aa)). Catalysis depends on Cys456, which acts as the Cysteine persulfide intermediate.

Belongs to the ThiI family.

Its subcellular location is the cytoplasm. It carries out the reaction [ThiI sulfur-carrier protein]-S-sulfanyl-L-cysteine + a uridine in tRNA + 2 reduced [2Fe-2S]-[ferredoxin] + ATP + H(+) = [ThiI sulfur-carrier protein]-L-cysteine + a 4-thiouridine in tRNA + 2 oxidized [2Fe-2S]-[ferredoxin] + AMP + diphosphate. The enzyme catalyses [ThiS sulfur-carrier protein]-C-terminal Gly-Gly-AMP + S-sulfanyl-L-cysteinyl-[cysteine desulfurase] + AH2 = [ThiS sulfur-carrier protein]-C-terminal-Gly-aminoethanethioate + L-cysteinyl-[cysteine desulfurase] + A + AMP + 2 H(+). It functions in the pathway cofactor biosynthesis; thiamine diphosphate biosynthesis. Catalyzes the ATP-dependent transfer of a sulfur to tRNA to produce 4-thiouridine in position 8 of tRNAs, which functions as a near-UV photosensor. Also catalyzes the transfer of sulfur to the sulfur carrier protein ThiS, forming ThiS-thiocarboxylate. This is a step in the synthesis of thiazole, in the thiamine biosynthesis pathway. The sulfur is donated as persulfide by IscS. In Escherichia fergusonii (strain ATCC 35469 / DSM 13698 / CCUG 18766 / IAM 14443 / JCM 21226 / LMG 7866 / NBRC 102419 / NCTC 12128 / CDC 0568-73), this protein is tRNA sulfurtransferase.